We begin with the raw amino-acid sequence, 307 residues long: Ribonuclease HII (307 aa).

The RNase H type-2 domain maps to 44 to 235; that stretch reads EPVAGVDEAG…VRRAGGRMEL (192 aa). Aspartate 50, glutamate 51, and aspartate 144 together coordinate a divalent metal cation. Positions 241–307 are disordered; the sequence is ADSDDSPGFA…SRPAELLEIP (67 aa). A compositionally biased stretch (low complexity) spans 250-280; that stretch reads ASGPAEAVPGPAGSAGAASAAARPAAAGPAG. A compositionally biased stretch (basic and acidic residues) spans 287–296; the sequence is RAADLRDNGD.

It belongs to the RNase HII family. Requires Mn(2+) as cofactor. It depends on Mg(2+) as a cofactor.

The protein resides in the cytoplasm. The enzyme catalyses Endonucleolytic cleavage to 5'-phosphomonoester.. In terms of biological role, endonuclease that specifically degrades the RNA of RNA-DNA hybrids. In Acidothermus cellulolyticus (strain ATCC 43068 / DSM 8971 / 11B), this protein is Ribonuclease HII.